Here is a 1090-residue protein sequence, read N- to C-terminus: Aminopeptidase-like protein AC3.5 (1090 aa).

Residues 1-77 are Cytoplasmic-facing; sequence MEDVDLGKDR…KPKKRIACSP (77 aa). Positions 21–33 are enriched in low complexity; that stretch reads GNGSASNLNNRNN. Residues 21–71 are disordered; the sequence is GNGSASNLNNRNNIPLSEKAAKEPLQTQPQEAPPAPKPKVQKQKPPVKPKK. A compositionally biased stretch (basic residues) spans 59–71; the sequence is KVQKQKPPVKPKK. A helical; Signal-anchor for type II membrane protein transmembrane segment spans residues 78 to 98; the sequence is GSAICLFLLAVAAIIFAAFLG. At 99–1090 the chain is on the lumenal side; sequence HYLTKQNYEM…DEMESSEEQE (992 aa). Asparagine 115, asparagine 123, asparagine 143, asparagine 176, and asparagine 230 each carry an N-linked (GlcNAc...) asparagine glycan. A disordered region spans residues 217-259; it reads VTKRAKKSVDSGTNSTSEMPEGSGEEAMATTATTTTTESTTPV. Residues 241-257 are compositionally biased toward low complexity; the sequence is EEAMATTATTTTTESTT. Asparagine 402, asparagine 710, asparagine 723, asparagine 789, asparagine 894, asparagine 919, asparagine 964, and asparagine 993 each carry an N-linked (GlcNAc...) asparagine glycan. Residues 1069–1080 show a composition bias toward basic and acidic residues; the sequence is YLDGKMKGPAKD. Positions 1069 to 1090 are disordered; that stretch reads YLDGKMKGPAKDDEMESSEEQE. Over residues 1081 to 1090 the composition is skewed to acidic residues; sequence DEMESSEEQE.

The protein belongs to the peptidase M1 family.

It localises to the membrane. The sequence is that of Aminopeptidase-like protein AC3.5 from Caenorhabditis elegans.